Reading from the N-terminus, the 152-residue chain is Deoxyuridine 5'-triphosphate nucleotidohydrolase (152 aa).

Substrate-binding positions include 63–65 (RSG), Asn76, and 80–82 (TID). Positions 129 to 152 (LDDTERGQGGYGSTGVSAMPPVDG) are disordered.

Belongs to the dUTPase family. Requires Mg(2+) as cofactor.

The catalysed reaction is dUTP + H2O = dUMP + diphosphate + H(+). The protein operates within pyrimidine metabolism; dUMP biosynthesis; dUMP from dCTP (dUTP route): step 2/2. Its function is as follows. This enzyme is involved in nucleotide metabolism: it produces dUMP, the immediate precursor of thymidine nucleotides and it decreases the intracellular concentration of dUTP so that uracil cannot be incorporated into DNA. This is Deoxyuridine 5'-triphosphate nucleotidohydrolase from Cutibacterium acnes (strain DSM 16379 / KPA171202) (Propionibacterium acnes).